The primary structure comprises 355 residues: 3-dehydroquinate synthase (355 aa).

NAD(+) is bound by residues 98–102 (GVVGD), 122–123 (TT), lysine 135, lysine 144, and 162–165 (TLDT). Glutamate 177, histidine 240, and histidine 257 together coordinate Zn(2+).

This sequence belongs to the sugar phosphate cyclases superfamily. Dehydroquinate synthase family. The cofactor is Co(2+). It depends on Zn(2+) as a cofactor. NAD(+) serves as cofactor.

It localises to the cytoplasm. It catalyses the reaction 7-phospho-2-dehydro-3-deoxy-D-arabino-heptonate = 3-dehydroquinate + phosphate. Its pathway is metabolic intermediate biosynthesis; chorismate biosynthesis; chorismate from D-erythrose 4-phosphate and phosphoenolpyruvate: step 2/7. Functionally, catalyzes the conversion of 3-deoxy-D-arabino-heptulosonate 7-phosphate (DAHP) to dehydroquinate (DHQ). This Dictyoglomus turgidum (strain DSM 6724 / Z-1310) protein is 3-dehydroquinate synthase.